Consider the following 328-residue polypeptide: Cytosolic Fe-S cluster assembly factor NBP35 (328 aa).

Residues cysteine 27, cysteine 41, cysteine 44, and cysteine 50 each coordinate [4Fe-4S] cluster. Position 80–87 (80–87) interacts with ATP; sequence GKGGVGKS. [4Fe-4S] cluster contacts are provided by cysteine 253 and cysteine 256.

This sequence belongs to the Mrp/NBP35 ATP-binding proteins family. NUBP1/NBP35 subfamily. As to quaternary structure, heterotetramer of 2 NBP35 and 2 CFD1 chains. Requires [4Fe-4S] cluster as cofactor.

Its subcellular location is the cytoplasm. The protein localises to the nucleus. Functionally, component of the cytosolic iron-sulfur (Fe/S) protein assembly (CIA) machinery. Required for maturation of extramitochondrial Fe-S proteins. The NBP35-CFD1 heterotetramer forms a Fe-S scaffold complex, mediating the de novo assembly of an Fe-S cluster and its transfer to target apoproteins. Required for biogenesis and export of both ribosomal subunits, which may reflect a role in assembly of the Fe/S clusters in RLI1, a protein which performs rRNA processing and ribosome export. This is Cytosolic Fe-S cluster assembly factor NBP35 from Saccharomyces cerevisiae (strain ATCC 204508 / S288c) (Baker's yeast).